A 512-amino-acid chain; its full sequence is tRNA-2-methylthio-N(6)-dimethylallyladenosine synthase (512 aa).

The interval 1–20 is disordered; that stretch reads MLQQADGVSPDRSSCDTPAP. One can recognise an MTTase N-terminal domain in the interval 21–137; it reads RTFEVRTYGC…LPTLLDRARH (117 aa). [4Fe-4S] cluster-binding residues include Cys-30, Cys-66, Cys-100, Cys-174, Cys-178, and Cys-181. In terms of domain architecture, Radical SAM core spans 160-397; the sequence is RESAYAAWVS…ELQERISWEE (238 aa). Residues 399 to 469 enclose the TRAM domain; that stretch reads RAQIGREVEL…PHHLIADAGP (71 aa). Residues 470-486 show a composition bias toward basic and acidic residues; it reads AEHRRTRAGDAHAEGRT. Positions 470 to 512 are disordered; sequence AEHRRTRAGDAHAEGRTPKTGVGLGMPGIGAPEPAPVTQGCAL.

The protein belongs to the methylthiotransferase family. MiaB subfamily. Monomer. It depends on [4Fe-4S] cluster as a cofactor.

Its subcellular location is the cytoplasm. It carries out the reaction N(6)-dimethylallyladenosine(37) in tRNA + (sulfur carrier)-SH + AH2 + 2 S-adenosyl-L-methionine = 2-methylsulfanyl-N(6)-dimethylallyladenosine(37) in tRNA + (sulfur carrier)-H + 5'-deoxyadenosine + L-methionine + A + S-adenosyl-L-homocysteine + 2 H(+). In terms of biological role, catalyzes the methylthiolation of N6-(dimethylallyl)adenosine (i(6)A), leading to the formation of 2-methylthio-N6-(dimethylallyl)adenosine (ms(2)i(6)A) at position 37 in tRNAs that read codons beginning with uridine. The protein is tRNA-2-methylthio-N(6)-dimethylallyladenosine synthase of Mycolicibacterium gilvum (strain PYR-GCK) (Mycobacterium gilvum (strain PYR-GCK)).